A 163-amino-acid chain; its full sequence is UPF0763 protein JJD26997_0796 (163 aa).

Belongs to the UPF0763 family.

This is UPF0763 protein JJD26997_0796 from Campylobacter jejuni subsp. doylei (strain ATCC BAA-1458 / RM4099 / 269.97).